The chain runs to 258 residues: Pimeloyl-[acyl-carrier protein] methyl ester esterase (258 aa).

Substrate-binding positions include tryptophan 22, 84–85 (SL), and 145–149 (FLAIQ). The active-site Nucleophile is serine 84. Active-site residues include aspartate 209 and histidine 238. Histidine 238 contributes to the substrate binding site.

It belongs to the AB hydrolase superfamily. Carboxylesterase BioH family. Monomer.

The protein localises to the cytoplasm. It catalyses the reaction 6-carboxyhexanoyl-[ACP] methyl ester + H2O = 6-carboxyhexanoyl-[ACP] + methanol + H(+). It functions in the pathway cofactor biosynthesis; biotin biosynthesis. In terms of biological role, the physiological role of BioH is to remove the methyl group introduced by BioC when the pimeloyl moiety is complete. It allows to synthesize pimeloyl-ACP via the fatty acid synthetic pathway through the hydrolysis of the ester bonds of pimeloyl-ACP esters. This chain is Pimeloyl-[acyl-carrier protein] methyl ester esterase, found in Pseudoalteromonas atlantica (strain T6c / ATCC BAA-1087).